Consider the following 198-residue polypeptide: Endonuclease V (198 aa).

2 residues coordinate Mg(2+): D38 and D101.

This sequence belongs to the endonuclease V family. It depends on Mg(2+) as a cofactor.

The protein localises to the cytoplasm. It catalyses the reaction Endonucleolytic cleavage at apurinic or apyrimidinic sites to products with a 5'-phosphate.. Its function is as follows. DNA repair enzyme involved in the repair of deaminated bases. Selectively cleaves double-stranded DNA at the second phosphodiester bond 3' to a deoxyinosine leaving behind the intact lesion on the nicked DNA. The protein is Endonuclease V of Saccharolobus islandicus (strain M.16.4 / Kamchatka #3) (Sulfolobus islandicus).